Consider the following 705-residue polypeptide: MSRDLQNHLLFETATEVANRVGGIYSVLKSKAPITVAQYKDHYHLIGPLNKATYQNEVDILDWKKPEAFSDEMRPVQHALQTMESRGVHFVYGRWLIEGAPKVILFDLDSVRGYSNEWKGDLWSLVGIPSPENDFETNDAILLGYTVAWFLGEVAHLDSQHAIVAHFHEWLAGVALPLCRKRRIDVVTIFTTHATLLGRYLCASGSFDFYNCLESVDVDHEAGRFGIYHRYCIERAAAHSADVFTTVSQITAFEAEHLLKRKPDGILPNGLNVIKFQAFHEFQNLHALKKEKINDFVRGHFHGCFDFDLDNTLYFFIAGRYEYKNKGADMFIEALARLNYRLKVSGSKKTVVAFIVMPAKNNSFTVEALKGQAEVRALENTVHEVTTSIGKRIFDHAIRYPHNGLTTELPTDLGELLKSSDKVMLKRRILALRRPEGQLPPIVTHNMVDDANDLILNKIRQVQLFNSPSDRVKMIFHPEFLNANNPILGLDYDEFVRGCHLGVFPSYYEPWGYTPAECTVMGVPSITTNVSGFGAYMEDLIETNQAKDYGIYIVDRRFKAPDESVEQLVDYMEEFVKKTRRQRINQRNRTERLSDLLDWKRMGLEYVKARQLALRRGYPDQFRELVGEELNDSNMDALAGGKKLKVARPLSVPGSPRDLRSNSTVYMTPGDLGTLQEVNNADDYFSLGVNPAADDDDDGPYADDS.

Position 20 (Arg-20) interacts with UDP. Ser-159 is subject to Phosphoserine. 2 residues coordinate UDP-alpha-D-glucose: His-193 and Arg-199. Residues His-280, Glu-281, Gln-283, His-286, and Lys-290 each contribute to the alpha-D-glucose 6-phosphate site. A UDP-binding site is contributed by Arg-320. Arg-320 provides a ligand contact to UDP-alpha-D-glucose. Ser-363 and Ser-467 each carry phosphoserine. Residue His-500 participates in alpha-D-glucose 6-phosphate binding. UDP-alpha-D-glucose contacts are provided by Glu-509, Trp-511, and Gly-512. UDP is bound at residue Thr-514. Alpha-D-glucose 6-phosphate is bound by residues Arg-583 and Arg-587. The residue at position 651 (Ser-651) is a Phosphoserine. Ser-655 carries the phosphoserine; by PHO85 modification. Ser-661 and Ser-663 each carry phosphoserine; by PKA. Thr-668 is subject to Phosphothreonine; by PHO85. The disordered stretch occupies residues 686-705; sequence SLGVNPAADDDDDGPYADDS. The segment covering 693–705 has biased composition (acidic residues); sequence ADDDDDGPYADDS.

Belongs to the glycosyltransferase 3 family. In terms of assembly, interacts with PCL10. In terms of processing, phosphorylated by the cyclin-CDK PCL10-PHO85. Phosphorylation causes inactivation of enzyme.

Its subcellular location is the cytoplasm. It is found in the cytosol. The enzyme catalyses [(1-&gt;4)-alpha-D-glucosyl](n) + UDP-alpha-D-glucose = [(1-&gt;4)-alpha-D-glucosyl](n+1) + UDP + H(+). It functions in the pathway glycan biosynthesis; glycogen biosynthesis. Allosteric activation by glucose-6-phosphate, and phosphorylation by a cAMP-dependent kinase. Its function is as follows. Glycogen synthase participates in the glycogen biosynthetic process along with glycogenin and glycogen branching enzyme. Extends the primer composed of a few glucose units formed by glycogenin by adding new glucose units to it. In this context, glycogen synthase transfers the glycosyl residue from UDP-Glc to the non-reducing end of alpha-1,4-glucan. The chain is Glycogen [starch] synthase isoform 2 (GSY2) from Saccharomyces cerevisiae (strain ATCC 204508 / S288c) (Baker's yeast).